The primary structure comprises 1102 residues: MGSDYDSFDDDVADEVLMALDKPATSGLHSREQEQQRDISNATPHTSTDLELEDFGSDAFDYSPERERAKPIQTARNQARTFQQTTLLGRIASQAPEPLGTQPRNSRVFRADLPPEVPTHHALDPEALKTWVYPTNLGPIRDYQFSIVKNGLFNNTLVALPTGLGKTFIAATVILNFFRWTRNAQMVFVAPTKPLASQQVEACLNIAGIPRSQSTLLTGETKPVLREAEWEGKRLFFMTPQTLMNDLSKGYADPKRIVLLVVDEAHRATGDYAYVKVIEFIRRFSKSFRVLALTATPGSTVEGVQDVIDNLGVSHVEIRTEESIDIRNYVHSREIDRVVLEPSDEMLRISELFSQALKPLHSKISQQKIYIGRDPMSITTFGLLKARQDWMKGPGRFANQGLKMMLMAIFTILQSLAHAIKLLNYHGIRPFYDNLVAFRSETEDKGQKGSKYKRQLIGEQSFQEMMDLASKWLKIDGFAGHPKLTHLCDNLLNYFMDAGEGSSTRVIVFSEYRDSAEEITRVLNVHKPMISASLFVGQADSKKSEGMKQKQQIETIAKFRDGIFNVLVATSIGEEGLDIGQVDLIICYDASSSPIRMLQRMGRTGRKRAGKITLLLMKGKEEDNYAKAQDNYEKMQKLICEGSRFNFRHDLSSRIVPRDVKPEVDKRMVEIPIENTQDTSLPEPKARSTRGKKASKKKFNMPDGVETGFNSVASMLGISASKTKAKPNKSPKKAESKETDEISPVPPLEGVLLSVKELAELNKKYRDLPFFHQDTEEICMPSLTARPDLQRVLRPTVHVKHGSYTKRCVRLFKKLSHSQGIETRHTKPHGDTDKSRYLDISVPPFAEDSGEDVVVVPSGRKRSLSPSSAASPPPPGRKRKANTTAAPRSKRQSVVDEYASESEDDTAAARQRKTNAAASPESKRQSVLDEYASESDAEAVTQASEDEESVGSLADFISDGEANGNFPKDMTGFTSDEDDDYRSGSLAKSSLSGPLSGRQVHRSSGAASKSGSTASTAAKPFFVPASLPGTQQTDDDEDMPDIGILVGKKQPETRVRKPAKKSNAVFLSSDDDDDDNDDEDDVQPGPAKRTVRRRVIEDSESG.

The segment at 19–55 (ALDKPATSGLHSREQEQQRDISNATPHTSTDLELEDF) is disordered. Positions 38–49 (DISNATPHTSTD) are enriched in polar residues. Positions 147–315 (IVKNGLFNNT…DVIDNLGVSH (169 aa)) constitute a Helicase ATP-binding domain. 160 to 167 (LPTGLGKT) contributes to the ATP binding site. The short motif at 263–266 (DEAH) is the DEAH box element. Residues 490 to 651 (NLLNYFMDAG…GSRFNFRHDL (162 aa)) form the Helicase C-terminal domain. 4 disordered regions span residues 672–702 (PIEN…FNMP), 720–743 (ASKT…DEIS), 818–837 (SQGI…KSRY), and 858–1102 (SGRK…SESG). A compositionally biased stretch (basic residues) spans 687 to 699 (RSTRGKKASKKKF). Basic and acidic residues predominate over residues 822 to 837 (ETRHTKPHGDTDKSRY). Low complexity predominate over residues 1003–1019 (SSGAASKSGSTASTAAK). The span at 1069-1082 (SDDDDDDNDDEDDV) shows a compositional bias: acidic residues.

It belongs to the DEAD box helicase family. DEAH subfamily. FANCM sub-subfamily. In terms of assembly, interacts with the MHF histone-fold complex to form the FANCM-MHF complex.

The protein localises to the nucleus. The catalysed reaction is ATP + H2O = ADP + phosphate + H(+). Functionally, ATP-dependent DNA helicase involved in DNA damage repair by homologous recombination and in genome maintenance. Capable of unwinding D-loops. Plays a role in limiting crossover recombinants during mitotic DNA double-strand break (DSB) repair. Component of a FANCM-MHF complex which promotes gene conversion at blocked replication forks, probably by reversal of the stalled fork. This is ATP-dependent DNA helicase MPH1 from Pyricularia oryzae (strain 70-15 / ATCC MYA-4617 / FGSC 8958) (Rice blast fungus).